The primary structure comprises 118 residues: V-type proton ATPase subunit G 3 (118 aa).

A coiled-coil region spans residues Ser-3–Asp-54. The segment at Lys-19–Glu-39 is disordered.

It belongs to the V-ATPase G subunit family. As to quaternary structure, V-ATPase is a heteromultimeric enzyme made up of two complexes: the ATP-hydrolytic V1 complex and the proton translocation V0 complex. The V1 complex consists of three catalytic AB heterodimers that form a heterohexamer, three peripheral stalks each consisting of EG heterodimers, one central rotor including subunits D and F, and the regulatory subunits C and H. The proton translocation complex V0 consists of the proton transport subunit a, a ring of proteolipid subunits c9c'', rotary subunit d, subunits e and f, and two accessory subunits.

Its function is as follows. Subunit of the V1 complex of vacuolar(H+)-ATPase (V-ATPase), a multisubunit enzyme composed of a peripheral complex (V1) that hydrolyzes ATP and a membrane integral complex (V0) that translocates protons. V-ATPase is responsible for acidifying and maintaining the pH of intracellular compartments and in some cell types, is targeted to the plasma membrane, where it is responsible for acidifying the extracellular environment. The chain is V-type proton ATPase subunit G 3 (atp6v1g3) from Xenopus laevis (African clawed frog).